A 176-amino-acid polypeptide reads, in one-letter code: Nucleoside triphosphate/diphosphate phosphatase (176 aa).

R23 acts as the Proton donor in catalysis. 6 residues coordinate Mg(2+): N87, D103, D105, D107, D120, and E123.

Belongs to the Ntdp family. Requires Mg(2+) as cofactor.

The enzyme catalyses a ribonucleoside 5'-triphosphate + H2O = a ribonucleoside 5'-diphosphate + phosphate + H(+). It carries out the reaction a ribonucleoside 5'-diphosphate + H2O = a ribonucleoside 5'-phosphate + phosphate + H(+). Its function is as follows. Has nucleoside phosphatase activity towards nucleoside triphosphates and nucleoside diphosphates. In Bacillus cereus (strain B4264), this protein is Nucleoside triphosphate/diphosphate phosphatase.